A 433-amino-acid polypeptide reads, in one-letter code: Trigger factor (433 aa).

Residues 166–251 (GDFAVIDFEG…LHEIQERAKP (86 aa)) form the PPIase FKBP-type domain.

This sequence belongs to the FKBP-type PPIase family. Tig subfamily.

The protein localises to the cytoplasm. It carries out the reaction [protein]-peptidylproline (omega=180) = [protein]-peptidylproline (omega=0). In terms of biological role, involved in protein export. Acts as a chaperone by maintaining the newly synthesized protein in an open conformation. Functions as a peptidyl-prolyl cis-trans isomerase. In Aliarcobacter butzleri (strain RM4018) (Arcobacter butzleri), this protein is Trigger factor.